The chain runs to 141 residues: Small ribosomal subunit protein eS12 (141 aa).

This sequence belongs to the eukaryotic ribosomal protein eS12 family. Component of the small ribosomal subunit. Mature ribosomes consist of a small (40S) and a large (60S) subunit. The 40S subunit contains about 32 different proteins and 1 molecule of RNA (18S). The 60S subunit contains about 42 different proteins and 3 molecules of RNA (28S, 5.8S and 5S).

Its subcellular location is the cytoplasm. Its function is as follows. Component of the ribosome, a large ribonucleoprotein complex responsible for the synthesis of proteins in the cell. The small ribosomal subunit (SSU) binds messenger RNAs (mRNAs) and translates the encoded message by selecting cognate aminoacyl-transfer RNA (tRNA) molecules. The large subunit (LSU) contains the ribosomal catalytic site termed the peptidyl transferase center (PTC), which catalyzes the formation of peptide bonds, thereby polymerizing the amino acids delivered by tRNAs into a polypeptide chain. The nascent polypeptides leave the ribosome through a tunnel in the LSU and interact with protein factors that function in enzymatic processing, targeting, and the membrane insertion of nascent chains at the exit of the ribosomal tunnel. The polypeptide is Small ribosomal subunit protein eS12 (Plasmodium falciparum (isolate 3D7)).